We begin with the raw amino-acid sequence, 74 residues long: U3-agatoxin-Ao1h (74 aa).

The N-terminal stretch at 1–20 (MRAIISLLLISTMVFGVIEA) is a signal peptide. The propeptide occupies 21 to 34 (VSVQKSLKIFEGER). 4 cysteine pairs are disulfide-bonded: Cys-37–Cys-53, Cys-44–Cys-58, Cys-52–Cys-68, and Cys-60–Cys-66. Asparagine amide is present on Asn-72.

The protein belongs to the neurotoxin 07 (Beta/delta-agtx) family. 03 (aga-4) subfamily. Aga sub-subfamily. Expressed by the venom gland.

The protein localises to the secreted. Insecticidal neurotoxin that induces an irreversible spastic paralysis when injected into insects. Modifies presynaptic voltage-gated sodium channels (Nav), causing them to open at the normal resting potential of the nerve. This leads to spontaneous release of neurotransmitter and repetitive action potentials in motor neurons. The chain is U3-agatoxin-Ao1h from Agelena orientalis (Funnel-web spider).